The chain runs to 307 residues: Follistatin-related protein 1 (307 aa).

Residues 1–19 form the signal peptide; the sequence is MMWRRWLALALVAVAWVHA. The Follistatin-like domain occupies 29-52; that stretch reads ICANVFCGAGRECAVTEKGEPTCL. 5 disulfide bridges follow: cysteine 30–cysteine 41, cysteine 35–cysteine 51, cysteine 53–cysteine 83, cysteine 57–cysteine 76, and cysteine 65–cysteine 97. The region spanning 47-99 is the Kazal-like domain; the sequence is GEPTCLCIEQCKPHKRPVCGSNGKTYLNHCELHRDACLTGSKIQVDYDGHCKE. N-linked (GlcNAc...) asparagine glycosylation is present at asparagine 143. In terms of domain architecture, EF-hand 1 spans 143 to 177; the sequence is NYSEILDKYFKNFDNGDSRLDSSEFLKFVEQNETA. Residue serine 164 is modified to Phosphoserine. Residues asparagine 174 and asparagine 179 are each glycosylated (N-linked (GlcNAc...) asparagine). The 36-residue stretch at 192-227 folds into the EF-hand 2 domain; it reads LRGLCVDALIELSDENADWKLSFQEFLKCLNPSFNP. In terms of domain architecture, VWFC spans 232-286; the sequence is CALEDETYADGAETEVDCNRCVCACGNWVCTAMTCDGKNQKGAQTQAEEEMTRYV.

As to quaternary structure, homodimer. Interacts with SCN10A. Interacts with DIP2A; DIP2A may act as a cell surface receptor for FSTL1. Interacts with BMP4. Interacts with CD14; this interaction promotes TL4-mediated signaling cascade.

It localises to the secreted. In terms of biological role, secreted glycoprotein that is involved in various physiological processes, such as angiogenesis, regulation of the immune response, cell proliferation and differentiation. Plays a role in the development of the central nervous system, skeletal system, lungs, and ureter. Promotes endothelial cell survival, migration and differentiation into network structures in an AKT-dependent manner. Also promotes survival of cardiac myocytes. Initiates various signaling cascades by activating different receptors on the cell surface such as DIP2A, TLR4 or BMP receptors. This chain is Follistatin-related protein 1 (FSTL1), found in Bos taurus (Bovine).